Here is a 383-residue protein sequence, read N- to C-terminus: tRNA-specific 2-thiouridylase MnmA (383 aa).

ATP is bound by residues 10–17 (AMSGGVDS) and Met-36. Cys-107 serves as the catalytic Nucleophile. Residues Cys-107 and Cys-206 are joined by a disulfide bond. Gly-131 lines the ATP pocket. Positions 155-157 (KDQ) are interaction with tRNA. Cys-206 functions as the Cysteine persulfide intermediate in the catalytic mechanism. An interaction with tRNA region spans residues 315–316 (RY).

It belongs to the MnmA/TRMU family.

It localises to the cytoplasm. The catalysed reaction is S-sulfanyl-L-cysteinyl-[protein] + uridine(34) in tRNA + AH2 + ATP = 2-thiouridine(34) in tRNA + L-cysteinyl-[protein] + A + AMP + diphosphate + H(+). Functionally, catalyzes the 2-thiolation of uridine at the wobble position (U34) of tRNA, leading to the formation of s(2)U34. This Salinibacter ruber (strain DSM 13855 / M31) protein is tRNA-specific 2-thiouridylase MnmA.